The following is a 414-amino-acid chain: Phospholipid-transporting ATPase accessory subunit LEM3 (414 aa).

The interval M1–N50 is required for localization to the plasma membrane. Over M1–T74 the chain is Cytoplasmic. The disordered stretch occupies residues A20–R52. Residues N26–E42 show a composition bias toward acidic residues. S36 is modified (phosphoserine). Residues V75 to A95 form a helical membrane-spanning segment. The Extracellular portion of the chain corresponds to Q96–P372. 2 disulfides stabilise this stretch: C110-C159 and C216-C231. Residue N113 is glycosylated (N-linked (GlcNAc...) asparagine). 5 N-linked (GlcNAc...) asparagine glycosylation sites follow: N240, N256, N279, N298, and N332. The helical transmembrane segment at F373–L393 threads the bilayer. Residues T394–K414 are Cytoplasmic-facing. Residues G400–K414 form a required for localization to the plasma membrane region.

Belongs to the CDC50/LEM3 family. Component of a flippase complex consisting of DNF1 or DNF2 and LEM3. Interacts with DNF1; the interaction is direct and required for their mutual export from the endoplasmic reticulum. Interacts with DNF2; the interaction is direct and required for their mutual export from the endoplasmic reticulum.

The protein localises to the cell membrane. Accessory component of a P4-ATPase flippase complex which catalyzes the hydrolysis of ATP coupled to the transport of glucosylceramide, phosphatidylcholine, phosphatidylethanolamine, and small amounts of phosphatidylserine from the lumenal to the cytosolic leaflet of the cell membrane and ensures the maintenance of asymmetric distribution of phospholipids. Contributes to substrate binding and specificity of the P4-ATPase catalytic subunit. This chain is Phospholipid-transporting ATPase accessory subunit LEM3, found in Saccharomyces cerevisiae (strain ATCC 204508 / S288c) (Baker's yeast).